Consider the following 693-residue polypeptide: Phosphoribosylformylglycinamidine synthase subunit PurL (693 aa).

H34 is an active-site residue. The ATP site is built by Y37 and K76. E78 is a binding site for Mg(2+). Substrate contacts are provided by residues S79 to H82 and R101. H80 serves as the catalytic Proton acceptor. Residue D102 coordinates Mg(2+). Q222 serves as a coordination point for substrate. Position 248 (D248) interacts with Mg(2+). Substrate is bound at residue E292–Q294. 2 residues coordinate ATP: D470 and G507. S510 provides a ligand contact to substrate.

Belongs to the FGAMS family. In terms of assembly, monomer. Part of the FGAM synthase complex composed of 1 PurL, 1 PurQ and 2 PurS subunits.

Its subcellular location is the cytoplasm. The catalysed reaction is N(2)-formyl-N(1)-(5-phospho-beta-D-ribosyl)glycinamide + L-glutamine + ATP + H2O = 2-formamido-N(1)-(5-O-phospho-beta-D-ribosyl)acetamidine + L-glutamate + ADP + phosphate + H(+). Its pathway is purine metabolism; IMP biosynthesis via de novo pathway; 5-amino-1-(5-phospho-D-ribosyl)imidazole from N(2)-formyl-N(1)-(5-phospho-D-ribosyl)glycinamide: step 1/2. Its function is as follows. Part of the phosphoribosylformylglycinamidine synthase complex involved in the purines biosynthetic pathway. Catalyzes the ATP-dependent conversion of formylglycinamide ribonucleotide (FGAR) and glutamine to yield formylglycinamidine ribonucleotide (FGAM) and glutamate. The FGAM synthase complex is composed of three subunits. PurQ produces an ammonia molecule by converting glutamine to glutamate. PurL transfers the ammonia molecule to FGAR to form FGAM in an ATP-dependent manner. PurS interacts with PurQ and PurL and is thought to assist in the transfer of the ammonia molecule from PurQ to PurL. This Pyrobaculum calidifontis (strain DSM 21063 / JCM 11548 / VA1) protein is Phosphoribosylformylglycinamidine synthase subunit PurL.